Consider the following 209-residue polypeptide: FMN-dependent NADH:quinone oxidoreductase 2 (209 aa).

Residues Ser-9, 15–17 (SVS), and 97–100 (MWNF) each bind FMN.

The protein belongs to the azoreductase type 1 family. As to quaternary structure, homodimer. It depends on FMN as a cofactor.

It catalyses the reaction 2 a quinone + NADH + H(+) = 2 a 1,4-benzosemiquinone + NAD(+). The catalysed reaction is N,N-dimethyl-1,4-phenylenediamine + anthranilate + 2 NAD(+) = 2-(4-dimethylaminophenyl)diazenylbenzoate + 2 NADH + 2 H(+). Quinone reductase that provides resistance to thiol-specific stress caused by electrophilic quinones. Functionally, also exhibits azoreductase activity. Catalyzes the reductive cleavage of the azo bond in aromatic azo compounds to the corresponding amines. In Pseudomonas syringae pv. tomato (strain ATCC BAA-871 / DC3000), this protein is FMN-dependent NADH:quinone oxidoreductase 2.